A 337-amino-acid polypeptide reads, in one-letter code: Formamidase (337 aa).

Residues 14 to 257 (VVIGLVQLQL…DEIITAEVRP (244 aa)) enclose the CN hydrolase domain. The active-site Proton acceptor is the glutamate 60. The active-site Proton donor is the lysine 129. Cysteine 162 serves as the catalytic Nucleophile.

This sequence belongs to the carbon-nitrogen hydrolase superfamily. Aliphatic amidase family.

It catalyses the reaction formamide + H2O = formate + NH4(+). Is an aliphatic amidase with a restricted substrate specificity, as it only hydrolyzes formamide. This is Formamidase from Bradyrhizobium sp. (strain ORS 278).